Reading from the N-terminus, the 176-residue chain is CDP-archaeol synthase (176 aa).

A run of 4 helical transmembrane segments spans residues 41 to 61 (GLIGGIVVGIIFGLMQIFLYN), 73 to 93 (IITVCALATGALLGDMVKSYF), 114 to 134 (VVGSLVLMTLALLVTGNLNWF), and 138 to 158 (FDSVGFLIATIIAILILSPLL).

It belongs to the CDP-archaeol synthase family. The cofactor is Mg(2+).

The protein resides in the cell membrane. It catalyses the reaction 2,3-bis-O-(geranylgeranyl)-sn-glycerol 1-phosphate + CTP + H(+) = CDP-2,3-bis-O-(geranylgeranyl)-sn-glycerol + diphosphate. It functions in the pathway membrane lipid metabolism; glycerophospholipid metabolism. In terms of biological role, catalyzes the formation of CDP-2,3-bis-(O-geranylgeranyl)-sn-glycerol (CDP-archaeol) from 2,3-bis-(O-geranylgeranyl)-sn-glycerol 1-phosphate (DGGGP) and CTP. This reaction is the third ether-bond-formation step in the biosynthesis of archaeal membrane lipids. This is CDP-archaeol synthase from Methanocorpusculum labreanum (strain ATCC 43576 / DSM 4855 / Z).